A 703-amino-acid chain; its full sequence is RING finger protein 214 (703 aa).

3 disordered regions span residues 1-59 (MAAS…TITK), 104-134 (GSQSDLKDVASTAGEEGDTSLRESLHPVTRS), and 146-197 (SRNC…SSSL). Ala-2 carries the N-acetylalanine modification. Residues Ser-15, Ser-40, Ser-47, and Ser-54 each carry the phosphoserine modification. A compositionally biased stretch (polar residues) spans 37–59 (TKDSAQKQKNSPLLSVSSQTITK). 2 positions are modified to phosphoserine: Ser-176 and Ser-196. Positions 220–379 (QDIEKNLDKM…AEKEAELHLT (160 aa)) form a coiled coil. Residues 486-552 (FPILNPALSQ…SAETPRPQPV (67 aa)) are disordered. The segment covering 493 to 504 (LSQPSQPSSPLP) has biased composition (low complexity). Phosphoserine occurs at positions 497, 511, and 516. The span at 523 to 536 (PHMPPAASIPPPPG) shows a compositional bias: pro residues. Residues 658–700 (CLMCQKLVQPSELHPMACTHVLHKECIKFWAQTNTNDTCPFCP) form an RING-type; atypical zinc finger.

This chain is RING finger protein 214 (RNF214), found in Homo sapiens (Human).